A 1201-amino-acid polypeptide reads, in one-letter code: MGEIKKKFVQWLEKLLIRLKEPNVKEESLFEDLSPSNDVDTDGKYSKALSWGLENKKVKNIALTGPYGSGKSSILNTFQKQYSREYSFLNISLATFNTDTDDMENKLEKSILQQMIYRVHDRTIPFSRFKRIKHIRTKSIIINLIFFFAFIIVGIYLFKPDALKGIYAETLVSRSLGTEDQQQIRLTILLALFFIVYPLLAYKRIYHFVRANLKLNKVTIANTTLEKNTGEENSSIFDKYLDEILYFFEASKYNVVIFEDLDRFNNIGIFERLRELNELINNSEQIDRRVVFIYAIKDDIFGDADTEKLTRDRTKFFDFIIPVIPIINASNSGDILKKKIKHSPYSDLINTHFLEDVTIYIDDMRVLKNIFNEFVIYQQKLSAIDLDPNKMLAMIIYKNIYPVDFSKLQYNKGLVYEIFQKKQLIIEEQIKLINAKIQQLERKLANIEVESLKSIAELNFIYLSELEISNLNSNYDINIDGEVFRGNTSNKDRFFEKLKNADTIYCYLRNRNGPATIKEIATVFGRKPNYFEREDAIKAIEKNEIQKFKKELLELEREKQEIRAQSLQVLITKMNSKDVFSDKLYEKKLLVYLLRHGYIDEMYNHYITYFYPESLSLSDIKFVFSIKNHESLPYSFELDNIGKIMSKLVGAEFKQIEVLNFHLLNYIMDHSEYRNYYDSIIERLANGSKESVTFIDGFKERAINKAAFIQSISSKWDDFWSFIELRSNYTQQKKEEYLSDILTYADIADIIRMNKESVMSFTLSKYLNLLSLVSDEEKIKELLLKLQVKFKSLDHLLNSETIYDFVVQRNLYEINIKTLSVILNDAPNITYAAVKNSDQQAVINYVNDNIDIFVEKVLLTEEIEEPEESFLELLNREDLDKRVKHAMIMKKTFAISDIGELIKELWPIVIRENKMVACWSNVITSYVEYNKKMPDFLIAFLNNPVNRKELSKNNIEAFDDKFDEAILEDISEEIINSRDITDETFEVLIASIQSWIYFPLGNVSEKRAKLLIDNDLLSLTPENFKELKLNFDTLHIQLALRNPDEFIDKQGDFSLDANDIKQLIDSNELSQFNKEIFVQHLNSNCLTDGNNDILKDTIYFINEHNLKITNELLTFLLESPTTLDTRLSLLAGQIKHIDNESITEFLTKIGEPYSEIAEKGRRIKISNNRTNKALVTALESKNYISSFKEDRERLRVNTKKK.

The helical transmembrane segment at 140-160 threads the bilayer; that stretch reads IIINLIFFFAFIIVGIYLFKP. Coiled-coil stretches lie at residues 420-459 and 536-574; these read QKKQLIIEEQIKLINAKIQQLERKLANIEVESLKSIAELN and AIKAIEKNEIQKFKKELLELEREKQEIRAQSLQVLITKM.

The protein resides in the cell membrane. This is an uncharacterized protein from Bacillus subtilis (strain 168).